A 288-amino-acid polypeptide reads, in one-letter code: Shikimate dehydrogenase (NADP(+)) (288 aa).

Residues 15 to 17 and Thr64 contribute to the shikimate site; that span reads SKS. Catalysis depends on Lys68, which acts as the Proton acceptor. Glu83 contacts NADP(+). 2 residues coordinate shikimate: Asn92 and Asp117. Residues 141 to 145, 165 to 170, and Met232 contribute to the NADP(+) site; these read GAGGA and NRTVSK. Tyr234 serves as a coordination point for shikimate. Gly254 contributes to the NADP(+) binding site.

It belongs to the shikimate dehydrogenase family. In terms of assembly, homodimer.

It catalyses the reaction shikimate + NADP(+) = 3-dehydroshikimate + NADPH + H(+). Its pathway is metabolic intermediate biosynthesis; chorismate biosynthesis; chorismate from D-erythrose 4-phosphate and phosphoenolpyruvate: step 4/7. Functionally, involved in the biosynthesis of the chorismate, which leads to the biosynthesis of aromatic amino acids. Catalyzes the reversible NADPH linked reduction of 3-dehydroshikimate (DHSA) to yield shikimate (SA). The protein is Shikimate dehydrogenase (NADP(+)) of Psychrobacter cryohalolentis (strain ATCC BAA-1226 / DSM 17306 / VKM B-2378 / K5).